The sequence spans 450 residues: Homogentisate 1,2-dioxygenase (450 aa).

Catalysis depends on H304, which acts as the Proton acceptor. Residues H347 and E353 each coordinate Fe cation. Homogentisate is bound by residues Y362 and H383. H383 provides a ligand contact to Fe cation.

The protein belongs to the homogentisate dioxygenase family. As to quaternary structure, hexamer; dimer of trimers. Requires Fe cation as cofactor.

The enzyme catalyses homogentisate + O2 = 4-maleylacetoacetate + H(+). The protein operates within amino-acid degradation; L-phenylalanine degradation; acetoacetate and fumarate from L-phenylalanine: step 4/6. Functionally, involved in the catabolism of homogentisate (2,5-dihydroxyphenylacetate or 2,5-OH-PhAc), a central intermediate in the degradation of phenylalanine and tyrosine. Catalyzes the oxidative ring cleavage of the aromatic ring of homogentisate to yield maleylacetoacetate. This chain is Homogentisate 1,2-dioxygenase, found in Burkholderia mallei (strain NCTC 10229).